The sequence spans 286 residues: Elongation factor Ts (286 aa).

The involved in Mg(2+) ion dislocation from EF-Tu stretch occupies residues 82–85; that stretch reads TDFV.

Belongs to the EF-Ts family.

Its subcellular location is the cytoplasm. In terms of biological role, associates with the EF-Tu.GDP complex and induces the exchange of GDP to GTP. It remains bound to the aminoacyl-tRNA.EF-Tu.GTP complex up to the GTP hydrolysis stage on the ribosome. This chain is Elongation factor Ts, found in Hahella chejuensis (strain KCTC 2396).